We begin with the raw amino-acid sequence, 440 residues long: Ribosomal protein uS12 methylthiotransferase RimO (440 aa).

The MTTase N-terminal domain maps to 1–117 (MKVHLTSLGC…VIEAVAGKES (117 aa)). C10, C46, C80, C155, C159, and C162 together coordinate [4Fe-4S] cluster. Residues 141–371 (CATPHTVYVK…MTAQIDISSR (231 aa)) enclose the Radical SAM core domain. In terms of domain architecture, TRAM spans 374-440 (AKRVGSREPV…SAYDLTGEAQ (67 aa)).

Belongs to the methylthiotransferase family. RimO subfamily. It depends on [4Fe-4S] cluster as a cofactor.

The protein localises to the cytoplasm. The catalysed reaction is L-aspartate(89)-[ribosomal protein uS12]-hydrogen + (sulfur carrier)-SH + AH2 + 2 S-adenosyl-L-methionine = 3-methylsulfanyl-L-aspartate(89)-[ribosomal protein uS12]-hydrogen + (sulfur carrier)-H + 5'-deoxyadenosine + L-methionine + A + S-adenosyl-L-homocysteine + 2 H(+). Functionally, catalyzes the methylthiolation of an aspartic acid residue of ribosomal protein uS12. This Desulfosudis oleivorans (strain DSM 6200 / JCM 39069 / Hxd3) (Desulfococcus oleovorans) protein is Ribosomal protein uS12 methylthiotransferase RimO.